Reading from the N-terminus, the 123-residue chain is Large ribosomal subunit protein bL12 (123 aa).

Belongs to the bacterial ribosomal protein bL12 family. Homodimer. Part of the ribosomal stalk of the 50S ribosomal subunit. Forms a multimeric L10(L12)X complex, where L10 forms an elongated spine to which 2 to 4 L12 dimers bind in a sequential fashion. Binds GTP-bound translation factors.

In terms of biological role, forms part of the ribosomal stalk which helps the ribosome interact with GTP-bound translation factors. Is thus essential for accurate translation. The polypeptide is Large ribosomal subunit protein bL12 (Marinomonas sp. (strain MWYL1)).